A 936-amino-acid polypeptide reads, in one-letter code: 2-oxoglutarate dehydrogenase E1 component (936 aa).

This sequence belongs to the alpha-ketoglutarate dehydrogenase family. Homodimer. Part of the 2-oxoglutarate dehydrogenase (OGDH) complex composed of E1 (2-oxoglutarate dehydrogenase), E2 (dihydrolipoamide succinyltransferase) and E3 (dihydrolipoamide dehydrogenase); the complex contains multiple copies of the three enzymatic components (E1, E2 and E3). Thiamine diphosphate serves as cofactor.

The catalysed reaction is N(6)-[(R)-lipoyl]-L-lysyl-[protein] + 2-oxoglutarate + H(+) = N(6)-[(R)-S(8)-succinyldihydrolipoyl]-L-lysyl-[protein] + CO2. E1 component of the 2-oxoglutarate dehydrogenase (OGDH) complex which catalyzes the decarboxylation of 2-oxoglutarate, the first step in the conversion of 2-oxoglutarate to succinyl-CoA and CO(2). In Rickettsia prowazekii (strain Madrid E), this protein is 2-oxoglutarate dehydrogenase E1 component (sucA).